The chain runs to 314 residues: 2-oxo-3-(phosphooxy)propyl 3-oxoalkanoate synthase (314 aa).

Belongs to the AfsA family.

The catalysed reaction is a medium-chain 3-oxoacyl-[ACP] + dihydroxyacetone phosphate = a (4-alkanoyl-5-oxo-2,5-dihydrofuran-3-yl)methyl phosphate + holo-[ACP] + H2O. Its function is as follows. Involved of the biosynthesis of S.coelicolor butanolide 1 (SCB1), a gamma-butyrolactone that triggers antibiotic production. The chain is 2-oxo-3-(phosphooxy)propyl 3-oxoalkanoate synthase from Streptomyces coelicolor (strain ATCC BAA-471 / A3(2) / M145).